The chain runs to 786 residues: MNDRVLRVLEFNKIKELVKGYAITKSAKEMVLDLKPYDSVYDVKEHLEETKEALDILMRKGNPPFEGLYDVKEAITRAEKGGVLSIEGLLRIGNMLSVTRKLSDFLARKEEEEEHRILEGMREGLIVLRGVESAISKAIVSEDEIADSASDKLYSIRRSLKEKNSSIRDKVNSIVRSNAQYLQDSLYTVRGDRYVIPVKAEYKSQVPGLVHDQSSTGATLFIEPTALVNLNNEIKELMLKERAEIERILAELSALVYKNIDVIKVNFNIIVELDFIFAKAKYGSDLGGTMPIVNEEGVIDLMDARHPLIPKDKVVSSDIYLGREFSTLLITGPNTGGKTVTLKTTGLIELMGLSGLLIPASENSSISFFEEIFADIGDEQSIEQSLSTFSSHMTNIVKIMEKANNKSFVLFDELGAGTDPTEGAALAISILENLRARGCRIMSTTHYSELKGYALKTENVENASVEFNVETLRPTYRLLIGVPGKSNAFEISRRLGLKDNIIEEAKKVISTESLQFEDLIQSLQEKSIKAENDAREAAILRNDAEKYKNRYKEKFERIESVRDNVYADARREAKQILDSAKEEADTILKNMRDLERMGISSDARRKLEAERGKLRDKISDAEARLQKKKEEQKGEELKKIEVGMEALLPSINQKVIVLSKPDNKGEVQVQAGIMKINVKAKDLRVAKETKEEKKIKKREARLNLRQVDPSIDLRGMDSEEACYTADKYLDDAYVAGRGEVTLVHGKGTGVLRKAINDMLKKHPHVKSHRLGEYGEGGTGVTVVILK.

332 to 339 serves as a coordination point for ATP; it reads GPNTGGKT. The 76-residue stretch at 711 to 786 folds into the Smr domain; it reads IDLRGMDSEE…GTGVTVVILK (76 aa).

This sequence belongs to the DNA mismatch repair MutS family. MutS2 subfamily. Homodimer. Binds to stalled ribosomes, contacting rRNA.

In terms of biological role, endonuclease that is involved in the suppression of homologous recombination and thus may have a key role in the control of bacterial genetic diversity. Its function is as follows. Acts as a ribosome collision sensor, splitting the ribosome into its 2 subunits. Detects stalled/collided 70S ribosomes which it binds and splits by an ATP-hydrolysis driven conformational change. Acts upstream of the ribosome quality control system (RQC), a ribosome-associated complex that mediates the extraction of incompletely synthesized nascent chains from stalled ribosomes and their subsequent degradation. Probably generates substrates for RQC. This chain is Endonuclease MutS2, found in Clostridium perfringens (strain SM101 / Type A).